Reading from the N-terminus, the 327-residue chain is Transaldolase (327 aa).

Lysine 132 (schiff-base intermediate with substrate) is an active-site residue.

This sequence belongs to the transaldolase family. Type 1 subfamily. Homodimer.

Its subcellular location is the cytoplasm. The catalysed reaction is D-sedoheptulose 7-phosphate + D-glyceraldehyde 3-phosphate = D-erythrose 4-phosphate + beta-D-fructose 6-phosphate. Its pathway is carbohydrate degradation; pentose phosphate pathway; D-glyceraldehyde 3-phosphate and beta-D-fructose 6-phosphate from D-ribose 5-phosphate and D-xylulose 5-phosphate (non-oxidative stage): step 2/3. Functionally, transaldolase is important for the balance of metabolites in the pentose-phosphate pathway. This Chlamydia felis (strain Fe/C-56) (Chlamydophila felis) protein is Transaldolase.